Here is a 520-residue protein sequence, read N- to C-terminus: 2-isopropylmalate synthase (520 aa).

The 263-residue stretch at valine 12–threonine 274 folds into the Pyruvate carboxyltransferase domain. The Mn(2+) site is built by aspartate 21, histidine 209, histidine 211, and asparagine 245. Positions lysine 398 to serine 520 are regulatory domain.

It belongs to the alpha-IPM synthase/homocitrate synthase family. LeuA type 1 subfamily. Homodimer. Mn(2+) serves as cofactor.

The protein resides in the cytoplasm. The catalysed reaction is 3-methyl-2-oxobutanoate + acetyl-CoA + H2O = (2S)-2-isopropylmalate + CoA + H(+). It functions in the pathway amino-acid biosynthesis; L-leucine biosynthesis; L-leucine from 3-methyl-2-oxobutanoate: step 1/4. Catalyzes the condensation of the acetyl group of acetyl-CoA with 3-methyl-2-oxobutanoate (2-ketoisovalerate) to form 3-carboxy-3-hydroxy-4-methylpentanoate (2-isopropylmalate). This is 2-isopropylmalate synthase from Nitrobacter hamburgensis (strain DSM 10229 / NCIMB 13809 / X14).